The following is a 118-amino-acid chain: Large ribosomal subunit protein bL19 (118 aa).

The protein belongs to the bacterial ribosomal protein bL19 family.

Functionally, this protein is located at the 30S-50S ribosomal subunit interface and may play a role in the structure and function of the aminoacyl-tRNA binding site. The chain is Large ribosomal subunit protein bL19 from Helicobacter acinonychis (strain Sheeba).